Reading from the N-terminus, the 333-residue chain is B3 domain-containing protein At1g32030 (333 aa).

Polar residues-rich tracts occupy residues 76–99 and 134–143; these read VTVR…SLLD and PQNASSSSTL. Positions 76–179 are disordered; the sequence is VTVRNPEQNQ…SEPKKAKTPY (104 aa). Positions 220–328 form a DNA-binding region, TF-B3; the sequence is QSRLLMPFNT…ILSFALVLPP (109 aa).

It localises to the nucleus. In Arabidopsis thaliana (Mouse-ear cress), this protein is B3 domain-containing protein At1g32030.